The sequence spans 311 residues: Cell division protein ZipA (311 aa).

Over 1-5 the chain is Periplasmic; the sequence is MQELR. Residues 6–26 form a helical membrane-spanning segment; the sequence is FVLIVVGALAIMALLFHGLWT. Residues 27–311 are Cytoplasmic-facing; the sequence is SKKEGKAKFG…QIVEFKAANA (285 aa). The span at 32 to 54 shows a compositional bias: basic and acidic residues; the sequence is KAKFGDKPLSKLDLGESEPKESE. A disordered region spans residues 32–60; sequence KAKFGDKPLSKLDLGESEPKESEMYVAPE.

It belongs to the ZipA family. As to quaternary structure, interacts with FtsZ via their C-terminal domains.

Its subcellular location is the cell inner membrane. In terms of biological role, essential cell division protein that stabilizes the FtsZ protofilaments by cross-linking them and that serves as a cytoplasmic membrane anchor for the Z ring. Also required for the recruitment to the septal ring of downstream cell division proteins. The protein is Cell division protein ZipA of Vibrio vulnificus (strain CMCP6).